A 134-amino-acid chain; its full sequence is Cytochrome b (134 aa).

A run of 3 helical transmembrane segments spans residues 33–53, 77–98, and 113–133; these read FGSLLGVCLAVQILTGLFLAM, WLLRYLHANGASMFFICLYLHV, and WNVGILLLFAVMATAFMGYVL. 2 residues coordinate heme b: His83 and His97.

The protein belongs to the cytochrome b family. In terms of assembly, the cytochrome bc1 complex contains 11 subunits: 3 respiratory subunits (MT-CYB, CYC1 and UQCRFS1), 2 core proteins (UQCRC1 and UQCRC2) and 6 low-molecular weight proteins (UQCRH/QCR6, UQCRB/QCR7, UQCRQ/QCR8, UQCR10/QCR9, UQCR11/QCR10 and a cleavage product of UQCRFS1). This cytochrome bc1 complex then forms a dimer. It depends on heme b as a cofactor.

The protein resides in the mitochondrion inner membrane. Its function is as follows. Component of the ubiquinol-cytochrome c reductase complex (complex III or cytochrome b-c1 complex) that is part of the mitochondrial respiratory chain. The b-c1 complex mediates electron transfer from ubiquinol to cytochrome c. Contributes to the generation of a proton gradient across the mitochondrial membrane that is then used for ATP synthesis. The protein is Cytochrome b (MT-CYB) of Chiroderma trinitatum (Little big-eyed bat).